Consider the following 327-residue polypeptide: Phenylalanine--tRNA ligase alpha subunit (327 aa).

Position 252 (E252) interacts with Mg(2+).

Belongs to the class-II aminoacyl-tRNA synthetase family. Phe-tRNA synthetase alpha subunit type 1 subfamily. As to quaternary structure, tetramer of two alpha and two beta subunits. Mg(2+) serves as cofactor.

Its subcellular location is the cytoplasm. The catalysed reaction is tRNA(Phe) + L-phenylalanine + ATP = L-phenylalanyl-tRNA(Phe) + AMP + diphosphate + H(+). This Pectobacterium atrosepticum (strain SCRI 1043 / ATCC BAA-672) (Erwinia carotovora subsp. atroseptica) protein is Phenylalanine--tRNA ligase alpha subunit.